Here is a 496-residue protein sequence, read N- to C-terminus: Cytosol aminopeptidase (496 aa).

2 residues coordinate Mn(2+): Lys-258 and Asp-263. Lys-270 is a catalytic residue. The Mn(2+) site is built by Asp-281, Asp-340, and Glu-342. Residue Arg-344 is part of the active site.

Belongs to the peptidase M17 family. Mn(2+) is required as a cofactor.

The protein localises to the cytoplasm. It carries out the reaction Release of an N-terminal amino acid, Xaa-|-Yaa-, in which Xaa is preferably Leu, but may be other amino acids including Pro although not Arg or Lys, and Yaa may be Pro. Amino acid amides and methyl esters are also readily hydrolyzed, but rates on arylamides are exceedingly low.. The enzyme catalyses Release of an N-terminal amino acid, preferentially leucine, but not glutamic or aspartic acids.. Its function is as follows. Presumably involved in the processing and regular turnover of intracellular proteins. Catalyzes the removal of unsubstituted N-terminal amino acids from various peptides. The protein is Cytosol aminopeptidase (pepA) of Helicobacter pylori (strain J99 / ATCC 700824) (Campylobacter pylori J99).